The sequence spans 199 residues: Imidazole glycerol phosphate synthase subunit HisH 2 (199 aa).

Residues 1 to 199 (MIAVIDVSGN…NNFLSLESKC (199 aa)) form the Glutamine amidotransferase type-1 domain. The active-site Nucleophile is C76. Catalysis depends on residues H177 and E179.

In terms of assembly, heterodimer of HisH and HisF.

Its subcellular location is the cytoplasm. The catalysed reaction is 5-[(5-phospho-1-deoxy-D-ribulos-1-ylimino)methylamino]-1-(5-phospho-beta-D-ribosyl)imidazole-4-carboxamide + L-glutamine = D-erythro-1-(imidazol-4-yl)glycerol 3-phosphate + 5-amino-1-(5-phospho-beta-D-ribosyl)imidazole-4-carboxamide + L-glutamate + H(+). The enzyme catalyses L-glutamine + H2O = L-glutamate + NH4(+). It functions in the pathway amino-acid biosynthesis; L-histidine biosynthesis; L-histidine from 5-phospho-alpha-D-ribose 1-diphosphate: step 5/9. IGPS catalyzes the conversion of PRFAR and glutamine to IGP, AICAR and glutamate. The HisH subunit provides the glutamine amidotransferase activity that produces the ammonia necessary to HisF for the synthesis of IGP and AICAR. This Legionella pneumophila (strain Lens) protein is Imidazole glycerol phosphate synthase subunit HisH 2.